Consider the following 306-residue polypeptide: Lipoyl synthase (306 aa).

Cysteine 55, cysteine 60, cysteine 66, cysteine 81, cysteine 85, cysteine 88, and serine 294 together coordinate [4Fe-4S] cluster. The 217-residue stretch at 67-283 folds into the Radical SAM core domain; that stretch reads WNHRTATFLL…RSYALARGFT (217 aa).

It belongs to the radical SAM superfamily. Lipoyl synthase family. It depends on [4Fe-4S] cluster as a cofactor.

The protein resides in the cytoplasm. It catalyses the reaction [[Fe-S] cluster scaffold protein carrying a second [4Fe-4S](2+) cluster] + N(6)-octanoyl-L-lysyl-[protein] + 2 oxidized [2Fe-2S]-[ferredoxin] + 2 S-adenosyl-L-methionine + 4 H(+) = [[Fe-S] cluster scaffold protein] + N(6)-[(R)-dihydrolipoyl]-L-lysyl-[protein] + 4 Fe(3+) + 2 hydrogen sulfide + 2 5'-deoxyadenosine + 2 L-methionine + 2 reduced [2Fe-2S]-[ferredoxin]. It participates in protein modification; protein lipoylation via endogenous pathway; protein N(6)-(lipoyl)lysine from octanoyl-[acyl-carrier-protein]: step 2/2. Functionally, catalyzes the radical-mediated insertion of two sulfur atoms into the C-6 and C-8 positions of the octanoyl moiety bound to the lipoyl domains of lipoate-dependent enzymes, thereby converting the octanoylated domains into lipoylated derivatives. The polypeptide is Lipoyl synthase (Chloroflexus aurantiacus (strain ATCC 29364 / DSM 637 / Y-400-fl)).